The chain runs to 519 residues: Glucoamylase GLA1 (519 aa).

Residues 1-27 (MRFGVLISVFVAIVSALPLQEGPLNKR) form the signal peptide. Asn-115 and Asn-127 each carry an N-linked (GlcNAc...) asparagine glycan. Residue Trp-166 coordinates substrate. The N-linked (GlcNAc...) asparagine glycan is linked to Asn-205. Asp-234 acts as the Proton acceptor in catalysis. Glu-237 acts as the Proton donor in catalysis.

It belongs to the glycosyl hydrolase 15 family.

It carries out the reaction Hydrolysis of terminal (1-&gt;4)-linked alpha-D-glucose residues successively from non-reducing ends of the chains with release of beta-D-glucose.. The chain is Glucoamylase GLA1 (GLA1) from Saccharomycopsis fibuligera (Yeast).